We begin with the raw amino-acid sequence, 296 residues long: tRNA dimethylallyltransferase (296 aa).

Residue 2-9 (GPTASGKT) coordinates ATP. 4-9 (TASGKT) contributes to the substrate binding site. Interaction with substrate tRNA stretches follow at residues 27 to 30 (DSAL), 151 to 155 (QRLSR), and 232 to 237 (RCVGYR).

The protein belongs to the IPP transferase family. As to quaternary structure, monomer. Mg(2+) is required as a cofactor.

The enzyme catalyses adenosine(37) in tRNA + dimethylallyl diphosphate = N(6)-dimethylallyladenosine(37) in tRNA + diphosphate. Catalyzes the transfer of a dimethylallyl group onto the adenine at position 37 in tRNAs that read codons beginning with uridine, leading to the formation of N6-(dimethylallyl)adenosine (i(6)A). The protein is tRNA dimethylallyltransferase of Shewanella sp. (strain MR-4).